We begin with the raw amino-acid sequence, 454 residues long: NADP-specific glutamate dehydrogenase 1 (454 aa).

Ser2 carries the post-translational modification N-acetylserine. The active site involves Lys110. 174-203 (GVLTGKGLNWGGSLIRPEATGYGLVYYTQA) lines the NAD(+) pocket. Glycyl lysine isopeptide (Lys-Gly) (interchain with G-Cter in ubiquitin) cross-links involve residues Lys325, Lys371, and Lys433.

This sequence belongs to the Glu/Leu/Phe/Val dehydrogenases family. In terms of assembly, homohexamer.

It catalyses the reaction L-glutamate + NADP(+) + H2O = 2-oxoglutarate + NH4(+) + NADPH + H(+). Functionally, catalyzes the incorporation of an ammonium ion into alpha-ketoglutarate to form L-glutamate, the major route of assimilation of ammonia into an organic form in yeast. The polypeptide is NADP-specific glutamate dehydrogenase 1 (Saccharomyces cerevisiae (strain ATCC 204508 / S288c) (Baker's yeast)).